Here is a 96-residue protein sequence, read N- to C-terminus: Large ribosomal subunit protein eL43 (96 aa).

The C4-type zinc-finger motif lies at 41–62 (CPVCAFPKLKRVGTSIWVCDKC).

Belongs to the eukaryotic ribosomal protein eL43 family. Requires Zn(2+) as cofactor.

This chain is Large ribosomal subunit protein eL43, found in Methanococcus maripaludis (strain C6 / ATCC BAA-1332).